The following is a 233-amino-acid chain: Antiholin-like protein LrgB (233 aa).

The next 6 membrane-spanning stretches (helical) occupy residues 5-25, 33-53, 63-83, 97-117, 152-172, and 212-232; these read LGIN…VIAT, GFFL…FLKL, IGGD…AIPL, IFGG…LVAI, LTSL…AKIV, and IAVV…APIL.

Belongs to the CidB/LrgB family. LrgB subfamily.

It is found in the cell membrane. Inhibits the expression or activity of extracellular murein hydrolases by interacting, possibly with LrgA, with the holin-like proteins CidA and/or CidB. The LrgAB and CidAB proteins may affect the proton motive force of the membrane. May be involved in programmed cell death (PCD), possibly triggering PCD in response to antibiotics and environmental stresses. The protein is Antiholin-like protein LrgB of Staphylococcus epidermidis (strain ATCC 35984 / DSM 28319 / BCRC 17069 / CCUG 31568 / BM 3577 / RP62A).